The primary structure comprises 179 residues: UPF0134 protein MPN_145 (179 aa).

The protein belongs to the UPF0134 family.

In Mycoplasma pneumoniae (strain ATCC 29342 / M129 / Subtype 1) (Mycoplasmoides pneumoniae), this protein is UPF0134 protein MPN_145.